Reading from the N-terminus, the 146-residue chain is uncharacterized protein (146 aa).

A helical membrane pass occupies residues 7 to 27; sequence FVLSITIVLVILIIIAFIWYN.

It belongs to the asfivirus E146L family.

It is found in the host membrane. The protein resides in the virion. This is an uncharacterized protein from African swine fever virus (strain Badajoz 1971 Vero-adapted) (Ba71V).